A 157-amino-acid chain; its full sequence is NADPH-dependent 7-cyano-7-deazaguanine reductase (157 aa).

Residue C55 is the Thioimide intermediate of the active site. The active-site Proton donor is the D62. Substrate contacts are provided by residues 77-79 (VES) and 96-97 (HE).

It belongs to the GTP cyclohydrolase I family. QueF type 1 subfamily.

Its subcellular location is the cytoplasm. The catalysed reaction is 7-aminomethyl-7-carbaguanine + 2 NADP(+) = 7-cyano-7-deazaguanine + 2 NADPH + 3 H(+). Its pathway is tRNA modification; tRNA-queuosine biosynthesis. Functionally, catalyzes the NADPH-dependent reduction of 7-cyano-7-deazaguanine (preQ0) to 7-aminomethyl-7-deazaguanine (preQ1). In Neisseria meningitidis serogroup C / serotype 2a (strain ATCC 700532 / DSM 15464 / FAM18), this protein is NADPH-dependent 7-cyano-7-deazaguanine reductase.